The sequence spans 320 residues: ATP-dependent 6-phosphofructokinase (320 aa).

Position 12 (glycine 12) interacts with ATP. 22–26 contributes to the ADP binding site; sequence RGVVR. ATP contacts are provided by residues 73-74 and 103-106; these read RF and GDGS. Aspartate 104 contributes to the Mg(2+) binding site. 126-128 is a substrate binding site; sequence TID. Aspartate 128 serves as the catalytic Proton acceptor. Arginine 155 is a binding site for ADP. Substrate is bound by residues arginine 163 and 170–172; that span reads MGR. ADP is bound by residues 186 to 188, lysine 212, and 214 to 216; these read GCE and KKH. Residues glutamate 223, arginine 244, and 250 to 253 contribute to the substrate site; that span reads HIQR.

This sequence belongs to the phosphofructokinase type A (PFKA) family. ATP-dependent PFK group I subfamily. Prokaryotic clade 'B1' sub-subfamily. Homotetramer. Requires Mg(2+) as cofactor.

The protein localises to the cytoplasm. The enzyme catalyses beta-D-fructose 6-phosphate + ATP = beta-D-fructose 1,6-bisphosphate + ADP + H(+). It functions in the pathway carbohydrate degradation; glycolysis; D-glyceraldehyde 3-phosphate and glycerone phosphate from D-glucose: step 3/4. Its activity is regulated as follows. Allosterically activated by ADP and other diphosphonucleosides, and allosterically inhibited by phosphoenolpyruvate. Its function is as follows. Catalyzes the phosphorylation of D-fructose 6-phosphate to fructose 1,6-bisphosphate by ATP, the first committing step of glycolysis. This is ATP-dependent 6-phosphofructokinase from Vibrio campbellii (strain ATCC BAA-1116).